The chain runs to 336 residues: Ornithine carbamoyltransferase, catabolic (336 aa).

Residues 62 to 65 (STRT), Gln89, Arg113, and 140 to 143 (HPTQ) contribute to the carbamoyl phosphate site. Residues Asn172, Asp236, and 240-241 (SM) contribute to the L-ornithine site. Carbamoyl phosphate contacts are provided by residues 277 to 278 (CL) and Arg322.

Belongs to the aspartate/ornithine carbamoyltransferase superfamily. OTCase family.

Its subcellular location is the cytoplasm. The catalysed reaction is carbamoyl phosphate + L-ornithine = L-citrulline + phosphate + H(+). The protein operates within amino-acid degradation; L-arginine degradation via ADI pathway; carbamoyl phosphate from L-arginine: step 2/2. Its function is as follows. Reversibly catalyzes the transfer of the carbamoyl group from carbamoyl phosphate (CP) to the N(epsilon) atom of ornithine (ORN) to produce L-citrulline. In Staphylococcus aureus (strain N315), this protein is Ornithine carbamoyltransferase, catabolic (arcB).